The sequence spans 68 residues: MFTTKKSLLLLFFLGTISLSLCEEERGADEEEGDGEKLTKRALSILRGLEKLAKMGIALTNCKATKKC.

An N-terminal signal peptide occupies residues 1–22; it reads MFTTKKSLLLLFFLGTISLSLC. A propeptide spanning residues 23 to 39 is cleaved from the precursor; it reads EEERGADEEEGDGEKLT. An intrachain disulfide couples C62 to C68.

As to expression, expressed by the skin glands.

The protein resides in the secreted. Functionally, antimicrobial activity against Gram-negative bacterium E.coli. Stimulates insulin release. This is Palustrin-1c from Lithobates palustris (Pickerel frog).